The primary structure comprises 428 residues: 3-phosphoshikimate 1-carboxyvinyltransferase (428 aa).

Lys-21, Ser-22, and Arg-26 together coordinate 3-phosphoshikimate. Position 21 (Lys-21) interacts with phosphoenolpyruvate. Positions 92 and 120 each coordinate phosphoenolpyruvate. The 3-phosphoshikimate site is built by Ser-165, Gln-167, Asp-313, and Lys-340. Residue Gln-167 coordinates phosphoenolpyruvate. The active-site Proton acceptor is Asp-313. 2 residues coordinate phosphoenolpyruvate: Arg-344 and Arg-386.

This sequence belongs to the EPSP synthase family. As to quaternary structure, monomer.

It localises to the cytoplasm. It catalyses the reaction 3-phosphoshikimate + phosphoenolpyruvate = 5-O-(1-carboxyvinyl)-3-phosphoshikimate + phosphate. It functions in the pathway metabolic intermediate biosynthesis; chorismate biosynthesis; chorismate from D-erythrose 4-phosphate and phosphoenolpyruvate: step 6/7. Functionally, catalyzes the transfer of the enolpyruvyl moiety of phosphoenolpyruvate (PEP) to the 5-hydroxyl of shikimate-3-phosphate (S3P) to produce enolpyruvyl shikimate-3-phosphate and inorganic phosphate. This is 3-phosphoshikimate 1-carboxyvinyltransferase from Carboxydothermus hydrogenoformans (strain ATCC BAA-161 / DSM 6008 / Z-2901).